An 871-amino-acid chain; its full sequence is Protein translocase subunit SecA (871 aa).

Residues Gln-80, 98–102 (GEGKT), and Asp-537 contribute to the ATP site.

It belongs to the SecA family. Monomer and homodimer. Part of the essential Sec protein translocation apparatus which comprises SecA, SecYEG and auxiliary proteins SecDF. Other proteins may also be involved. A single SecA monomer interacts with SecY in the channel.

It is found in the cell inner membrane. The protein localises to the cytoplasm. It catalyses the reaction ATP + H2O + cellular proteinSide 1 = ADP + phosphate + cellular proteinSide 2.. Its function is as follows. Part of the Sec protein translocase complex. Interacts with the SecYEG preprotein conducting channel. Has a central role in coupling the hydrolysis of ATP to the transfer of proteins into and across the cell membrane, serving as an ATP-driven molecular motor driving the stepwise translocation of polypeptide chains across the membrane. This is Protein translocase subunit SecA from Thermotoga maritima (strain ATCC 43589 / DSM 3109 / JCM 10099 / NBRC 100826 / MSB8).